The chain runs to 261 residues: Phosphate import ATP-binding protein PstB 4 (261 aa).

The ABC transporter domain occupies 8–256 (IKVNNLSFYY…PHDSRTREYV (249 aa)). 40-47 (GPSGCGKS) is a binding site for ATP.

It belongs to the ABC transporter superfamily. Phosphate importer (TC 3.A.1.7) family. The complex is composed of two ATP-binding proteins (PstB), two transmembrane proteins (PstC and PstA) and a solute-binding protein (PstS).

The protein localises to the cell inner membrane. The enzyme catalyses phosphate(out) + ATP + H2O = ADP + 2 phosphate(in) + H(+). Its function is as follows. Part of the ABC transporter complex PstSACB involved in phosphate import. Responsible for energy coupling to the transport system. The polypeptide is Phosphate import ATP-binding protein PstB 4 (Trichormus variabilis (strain ATCC 29413 / PCC 7937) (Anabaena variabilis)).